A 449-amino-acid polypeptide reads, in one-letter code: MCDPQRDEELRPVPKERAVLESFFTQLGMFWFDRAKDYVEKEKDASKSAGAIWGSLLAALAHLAAAEKAYHNMTFLGQKLGGQSFFSRKDSIRTIYTSLHNELKKVVSMGRHAPGGSTPNLEELLPHLSEQLCHFTQARMEIADFYEKMHTLGSQKTVNSEELVGALDSILQKYSSRFHHPILSRLESSFQVEVDVLTQLLRCQAQISEWHFLPSLLNLHGAHSKLQAWGQVFERQRETRKHLFGGQSQKAVQPPHLFLWLQRLQATLLAKFSFYFHEALSRQTSQSEMKTLTARTSLDYFGKISGFIRKYDASNVSLVFDNRGSESFQGHGYHHPQSYREAPKGVDQFPAVVSLPGGERPVTHWPNVIMIMSDRSTELNTLDKVVHFYDDKVQSTYFLARPEPHFTIVVIFDGRKSERDSYIVAFLQELIGSLRNSKPFTSLKPGSKG.

This sequence belongs to the KICS2 family. In terms of assembly, may be part of the KICSTOR complex.

The protein resides in the lysosome membrane. In terms of biological role, as part of the KICSTOR complex may function in the amino acid-sensing branch of the TORC1 signaling pathway. This is KICSTOR subunit 2 (kics2) from Danio rerio (Zebrafish).